A 468-amino-acid chain; its full sequence is Putative BTB/POZ domain and WD-repeat protein R154 (468 aa).

The BTB domain occupies 14 to 85 (SDLQLIVEDS…FYGIDDKLPE (72 aa)). WD repeat units follow at residues 194-233 (HHSE…IIFN), 354-398 (DEIG…LVKS), and 401-440 (LFDV…IIYT).

The protein belongs to the mimivirus BTB/WD family.

This chain is Putative BTB/POZ domain and WD-repeat protein R154, found in Acanthamoeba polyphaga (Amoeba).